Here is a 2894-residue protein sequence, read N- to C-terminus: uncharacterized protein (2894 aa).

Residues 8-28 (ISIFVFTILLLSNVSLGLNVS) form a helical membrane-spanning segment. 20 PbH1 repeats span residues 543 to 567 (EVRWYIENNTLYFYDDPIYGYDISL), 2085 to 2107 (NYPLYIDNLTINASGGYGISMLN), 2135 to 2156 (FGNITIYNITISSCNQGLVLYK), 2158 to 2180 (GNGIKLINSQIKNSVYEGVYSKN), 2201 to 2223 (ISSILVNNSLIYKNRYEGLLLEN), 2224 to 2244 (SSSSILNSNIMNNSIGIYLKE), 2245 to 2266 (NYISKIQKSNISYNAYGIEIVN), 2267 to 2289 (SSNVYINSSNIFNASTDGIAIFN), 2290 to 2311 (GENVSVENSLLYNNNYSILSYG), 2341 to 2363 (LNNLKLYNSSVLNSGSYGLFIYS), 2367 to 2389 (ASNVNISKSLINGSYKDGIYIYG), 2390 to 2419 (VNAINIVNNNITNNGLIGGDPAGSGIKISG), 2422 to 2444 (TKGVLILNNNISHNLGNGISLEG), 2455 to 2477 (VENNIISNNGIEENSGNGIYIGG), 2479 to 2501 (VENVSIFNNTIQYSDAQAILIQE), 2512 to 2542 (GTNISIINNTIQYNGLTVTIGNITAGITVGA), 2550 to 2582 (NGYIIIEGNKIINNNLCPNPTYGGKVGGIEVYG), 2589 to 2611 (SLEFNISKNIIANNSAYGILIGA), 2612 to 2633 (SKDINIINNTIFNNEKGITIPN), and 2638 to 2660 (PYNIIISKNSIYNNSLLGIDLDD).

The protein resides in the membrane. This is an uncharacterized protein from Methanocaldococcus jannaschii (strain ATCC 43067 / DSM 2661 / JAL-1 / JCM 10045 / NBRC 100440) (Methanococcus jannaschii).